A 183-amino-acid polypeptide reads, in one-letter code: Probable chemoreceptor glutamine deamidase CheD (183 aa).

This sequence belongs to the CheD family.

The enzyme catalyses L-glutaminyl-[protein] + H2O = L-glutamyl-[protein] + NH4(+). Functionally, probably deamidates glutamine residues to glutamate on methyl-accepting chemotaxis receptors (MCPs), playing an important role in chemotaxis. This Rhizobium meliloti (strain 1021) (Ensifer meliloti) protein is Probable chemoreceptor glutamine deamidase CheD.